The following is a 186-amino-acid chain: Peptide deformylase (186 aa).

Fe cation contacts are provided by Cys-113 and His-157. Glu-158 is an active-site residue. His-161 serves as a coordination point for Fe cation.

It belongs to the polypeptide deformylase family. It depends on Fe(2+) as a cofactor.

The catalysed reaction is N-terminal N-formyl-L-methionyl-[peptide] + H2O = N-terminal L-methionyl-[peptide] + formate. In terms of biological role, removes the formyl group from the N-terminal Met of newly synthesized proteins. Requires at least a dipeptide for an efficient rate of reaction. N-terminal L-methionine is a prerequisite for activity but the enzyme has broad specificity at other positions. This chain is Peptide deformylase, found in Malacoplasma penetrans (strain HF-2) (Mycoplasma penetrans).